A 664-amino-acid polypeptide reads, in one-letter code: Methionine--tRNA ligase (664 aa).

A 'HIGH' region motif is present at residues Pro13–His23. 4 residues coordinate Zn(2+): Cys144, Cys147, Cys156, and Cys160. The 'KMSKS' region motif lies at Lys327–Ser331. Lys330 contacts ATP. Residues Glu566–Arg664 form the tRNA-binding domain.

It belongs to the class-I aminoacyl-tRNA synthetase family. MetG type 1 subfamily. In terms of assembly, homodimer. Requires Zn(2+) as cofactor.

Its subcellular location is the cytoplasm. It catalyses the reaction tRNA(Met) + L-methionine + ATP = L-methionyl-tRNA(Met) + AMP + diphosphate. Functionally, is required not only for elongation of protein synthesis but also for the initiation of all mRNA translation through initiator tRNA(fMet) aminoacylation. This is Methionine--tRNA ligase from Methanoculleus marisnigri (strain ATCC 35101 / DSM 1498 / JR1).